The following is a 127-amino-acid chain: E3 ubiquitin-protein ligase PPP1R11 (127 aa).

Disordered stretches follow at residues 1 to 55 (MAEA…EHMG) and 70 to 127 (AFGE…PMQH). A2 carries the N-acetylalanine modification. The segment covering 11 to 23 (ETVTETTVTVTTE) has biased composition (low complexity). Positions 40 to 55 (KKVEWSSDTVDNEHMG) are enriched in basic and acidic residues. An atypical RING finger domain 1 region spans residues 53–63 (HMGRRSSKCCC). Phosphoserine occurs at positions 74 and 75. A Phosphothreonine modification is found at T76. A Phosphoserine modification is found at S78. The atypical RING finger domain 2 stretch occupies residues 86–95 (CGHTHCVRGH). A compositionally biased stretch (basic residues) spans 90–100 (HCVRGHRKGRR). Positions 103–127 (TPGPTPTTPPQPPDPSQPPPGPMQH) are enriched in pro residues. At T110 the chain carries Phosphothreonine.

As to quaternary structure, interacts with TLR2 and UBE2D2. Post-translationally, auto-ubiquitinated.

The catalysed reaction is S-ubiquitinyl-[E2 ubiquitin-conjugating enzyme]-L-cysteine + [acceptor protein]-L-lysine = [E2 ubiquitin-conjugating enzyme]-L-cysteine + N(6)-ubiquitinyl-[acceptor protein]-L-lysine.. Its pathway is protein modification; protein ubiquitination. Functionally, atypical E3 ubiquitin-protein ligase which ubiquitinates TLR2 at 'Lys-754' leading to its degradation by the proteasome. Plays a role in regulating inflammatory cytokine release and gram-positive bacterial clearance by functioning, in part, through the ubiquitination and degradation of TLR2. Inhibitor of protein phosphatase 1. This Rattus norvegicus (Rat) protein is E3 ubiquitin-protein ligase PPP1R11 (Ppp1r11).